Reading from the N-terminus, the 411-residue chain is Isocitrate dehydrogenase [NADP] peroxisomal (411 aa).

NADP(+)-binding positions include 78–80 and Arg-85; that span reads TIT. Thr-80 provides a ligand contact to substrate. Substrate contacts are provided by residues 97-103, Arg-112, and Arg-135; that span reads SPNGTLR. Asp-254 lines the Mn(2+) pocket. Residue Lys-262 participates in NADP(+) binding. Asp-277 provides a ligand contact to Mn(2+). NADP(+)-binding positions include 312–317 and Asn-330; that span reads GTVTRH.

It belongs to the isocitrate and isopropylmalate dehydrogenases family. Requires Mg(2+) as cofactor. Mn(2+) is required as a cofactor.

Its subcellular location is the peroxisome. It catalyses the reaction D-threo-isocitrate + NADP(+) = 2-oxoglutarate + CO2 + NADPH. May play a role in N-alkane metabolism, glutamate synthesis, and/or NADPH generation in the peroxisomes. This chain is Isocitrate dehydrogenase [NADP] peroxisomal (IDP2), found in Candida tropicalis (Yeast).